A 166-amino-acid chain; its full sequence is NAD(P)H-quinone oxidoreductase subunit I, chloroplastic (166 aa).

2 4Fe-4S ferredoxin-type domains span residues 55 to 84 (GRIH…VDWK) and 95 to 124 (LNYS…MTEE). [4Fe-4S] cluster is bound by residues Cys64, Cys67, Cys70, Cys74, Cys104, Cys107, Cys110, and Cys114.

Belongs to the complex I 23 kDa subunit family. NDH is composed of at least 16 different subunits, 5 of which are encoded in the nucleus. The cofactor is [4Fe-4S] cluster.

The protein localises to the plastid. It is found in the chloroplast thylakoid membrane. The catalysed reaction is a plastoquinone + NADH + (n+1) H(+)(in) = a plastoquinol + NAD(+) + n H(+)(out). The enzyme catalyses a plastoquinone + NADPH + (n+1) H(+)(in) = a plastoquinol + NADP(+) + n H(+)(out). In terms of biological role, NDH shuttles electrons from NAD(P)H:plastoquinone, via FMN and iron-sulfur (Fe-S) centers, to quinones in the photosynthetic chain and possibly in a chloroplast respiratory chain. The immediate electron acceptor for the enzyme in this species is believed to be plastoquinone. Couples the redox reaction to proton translocation, and thus conserves the redox energy in a proton gradient. The chain is NAD(P)H-quinone oxidoreductase subunit I, chloroplastic from Parthenium hysterophorus (Santa Maria feverfew).